A 1372-amino-acid chain; its full sequence is Polysaccharide lyase 8 family protein HylA (1372 aa).

Positions 1–25 are cleaved as a signal peptide; the sequence is MIKKIIVVVAFMLTGFSLTAMSASA. The region spanning 63-172 is the F5/8 type C domain; the sequence is DGDETTRWSA…SIISFEAYEK (110 aa). Residues 183–242 form the BIG2 domain; the sequence is TENLTISEKRKQQLAFEVSPAGVDITEDQIEWSSSDPTIVTVDQTGNLTAVKSGEAKVTV. Residues His-487, Tyr-496, and Arg-550 contribute to the active site. 4 consecutive FIVAR domains span residues 1014–1075, 1084–1146, 1155–1217, and 1226–1288; these read KEAL…VKQL, DKTN…VKQL, and DKTN…VKRL. The segment at 1288-1336 is disordered; it reads LTLKNSGENKKEQKNGGNNGHLNTSTGVDQTGTKQVKPSSQGGFRKASQ. Over residues 1308–1329 the composition is skewed to polar residues; the sequence is HLNTSTGVDQTGTKQVKPSSQG. An LPXTG sorting signal motif is present at residues 1338-1342; the sequence is LPSTG. Thr-1341 carries the post-translational modification Pentaglycyl murein peptidoglycan amidated threonine. Positions 1342–1372 are cleaved as a propeptide — removed by sortase; sequence GEKKSIALVIIGLLVIASGCLLVFRKSKSKK.

Belongs to the polysaccharide lyase 8 family.

It is found in the secreted. The protein localises to the cell wall. Its function is as follows. Has a very modest degradation activity against heparin sodium salt (HS) in vitro. Involved in the pathogenesis of vancomycin-resistant E.faecalis infections. The protein is Polysaccharide lyase 8 family protein HylA of Enterococcus faecalis (strain ATCC 700802 / V583).